The following is a 321-amino-acid chain: Dolichyl N-acetyl-alpha-D-glucosaminyl phosphate 3-beta-D-2,3-diacetamido-2,3-dideoxy-beta-D-glucuronosyltransferase (321 aa).

2 helical membrane passes run 252-272 (FGFL…FIYI) and 290-310 (LYIA…YGFF).

Belongs to the glycosyltransferase 2 family.

It is found in the cell membrane. The enzyme catalyses an archaeal dolichyl N-acetyl-alpha-D-glucosaminyl phosphate + UDP-2,3-diacetamido-2,3-dideoxy-alpha-D-glucuronate = an archaeal dolichyl 3-O-(2,3-diacetamido-2,3-dideoxy- beta-D-glucuronosyl)-N-acetyl- alpha-D-glucosaminyl phosphate + UDP + H(+). The protein operates within cell surface structure biogenesis; S-layer biogenesis. It functions in the pathway protein modification; protein glycosylation. Its function is as follows. Involved in the assembly of an N-linked disaccharide that decorates the S-layer glycoprotein and flagellins. AglC catalyzes the transfer of 2,3-diacetamido-2,3-dideoxy-alpha-D-glucuronic acid (Glc-2,3-diNAcA) from uridine 5'-diphospho 2,3-diacetamido-2,3-dideoxy-alpha-D-glucuronic acid (UDP-Glc-2,3-diNAcA) to the AglK product Dol-P-GlcNAc to yield Dol-P-GlcNAc-Glc-2,3-diNAcA. AglC is specific for the monophosphate-linked Dol-P-GlcNAc. The polypeptide is Dolichyl N-acetyl-alpha-D-glucosaminyl phosphate 3-beta-D-2,3-diacetamido-2,3-dideoxy-beta-D-glucuronosyltransferase (Methanococcus voltae).